A 396-amino-acid chain; its full sequence is Potassium channel subfamily K member 9 (396 aa).

Over 1–8 (MKRQNVRT) the chain is Cytoplasmic. Residues 9–29 (LSLIACTFTYLLVGAAVFDAL) form a helical membrane-spanning segment. The Extracellular segment spans residues 30 to 88 (ESDHEMREEEKLKAEEVRLRGKYNISSDDYQQLELVILQSEPHRAGVQWKFAGSFYFAI). Residue Asn-53 is glycosylated (N-linked (GlcNAc...) asparagine). An intramembrane region (pore-forming) is located at residues 89-101 (TVITTIGYGHAAP). Thr-93, Ile-94, Gly-95, and Tyr-96 together coordinate K(+). Positions 93–98 (TIGYGH) are selectivity filter 1. At 102–107 (GTDAGK) the chain is on the extracellular side. The chain crosses the membrane as a helical span at residues 108-128 (AFCMFYAVLGIPLTLVMFQSL). At 129 to 158 (GERMNTFVRYLLKRIKKCCGMRNTEVSMEN) the chain is on the cytoplasmic side. The helical transmembrane segment at 159 to 179 (MVTVGFFSCMGTLCLGAAAFS) threads the bilayer. Residues 180 to 194 (QCEDWSFFHAYYYCF) are Extracellular-facing. The segment at residues 195–207 (ITLTTIGFGDFVA) is an intramembrane region (pore-forming). The K(+) site is built by Thr-199, Ile-200, Gly-201, and Phe-202. The tract at residues 199–204 (TIGFGD) is selectivity filter 2. At 208 to 218 (LQSKGALQRKP) the chain is on the extracellular side. Residues 219–239 (FYVAFSFMYILVGLTVIGAFL) form a helical membrane-spanning segment. The Cytoplasmic segment spans residues 240–396 (NLVVLRFLTM…HRLHIRRKSI (157 aa)). The interval 243 to 248 (VLRFLT) is X-gate.

This sequence belongs to the two pore domain potassium channel (TC 1.A.1.8) family. As to quaternary structure, homodimer. Heterodimer with KCNK1. Heterodimer with KCNK3. In terms of tissue distribution, highly expressed in the CNS and at lower levels in the colon, kidney, liver, lung, spleen, stomach and skeletal muscle. The highest expression was found in the olfactory nuclei, piriform cortex, cerebellum, antedorsal thalmic nucleus, pontine nucleus, dorsal raphe and several nuclei in the medulla. Shows a non-homogeneous distribution in the hippocampus. Expressed at highest levels in the lateral posterior and inferior portions and at medium levels in neocortex. Expressed in motoneurons, including hypoglossal motoneurons (at protein level).

Its subcellular location is the cell membrane. The protein localises to the mitochondrion inner membrane. It is found in the cell projection. It localises to the dendrite. It catalyses the reaction K(+)(in) = K(+)(out). It carries out the reaction Na(+)(in) = Na(+)(out). Its activity is regulated as follows. Activated by halothane and isoflurane. Inhibited by external acidification, diacylglycerol, anandamide and AGT/angiotensin II. Ruthenium red inhibits homomeric but not KCNK3:KCNK9 heteromeric channels. In terms of biological role, k(+) channel that conducts voltage-dependent outward rectifying currents upon membrane depolarization. Voltage sensing is coupled to K(+) electrochemical gradient in an 'ion flux gating' mode where outward but not inward ion flow opens the gate. Changes ion selectivity and becomes permeable to Na(+) ions in response to extracellular acidification. Protonation of the pH sensor His-98 stabilizes C-type inactivation conformation likely converting the channel from outward K(+)-conducting, to inward Na(+)-conducting to nonconductive state. Homo- and heterodimerizes to form functional channels with distinct regulatory and gating properties. Allows K(+) currents with fast-gating kinetics important for the repolarization and hyperpolarization phases of action potentials. In granule neurons, hyperpolarizes the resting membrane potential to limit intrinsic neuronal excitability, but once the action potential threshold is reached, supports high-frequency action potential firing and increased neuronal excitability. Homomeric and/or heteromeric KCNK3:KCNK9 channels operate in cerebellar granule cells, whereas heteromeric KCNK1:KCNK9 enables currents in hippocampal dentate gyrus granule neurons. Dispensable for central chemosensory respiration i.e. breathing controlled by brainstem CO2/pH, it rather conducts pH-sensitive currents and controls the firing rate of serotonergic raphe neurons involved in potentiation of the respiratory chemoreflex. In retinal ganglion cells, mediates outward rectifying currents that regulate action potentials in response to acidification of the synaptic cleft. Involved in transmission of image-forming and nonimage-forming visual information in the retina. In adrenal gland, contributes to the maintenance of a hyperpolarized resting membrane potential of aldosterone-producing cells at zona glomerulosa and limits aldosterone release as part of a regulatory mechanism that controls arterial blood pressure and electrolyte homeostasis. The polypeptide is Potassium channel subfamily K member 9 (Rattus norvegicus (Rat)).